Consider the following 1058-residue polypeptide: Kinesin-like protein KIN-7M, chloroplastic (1058 aa).

The transit peptide at 1 to 60 directs the protein to the chloroplast; sequence MASSSSRTRSRSPFSHRRPPSPYSSASSTSSSLINNRLLPRSSSTPTSTVYNSGGVTGSR. Positions 1 to 92 are disordered; it reads MASSSSRTRS…QSYPSEGLIG (92 aa). The span at 8–19 shows a compositional bias: basic residues; sequence TRSRSPFSHRRP. The span at 23–49 shows a compositional bias: low complexity; sequence YSSASSTSSSLINNRLLPRSSSTPTST. Positions 50–70 are enriched in polar residues; the sequence is VYNSGGVTGSRSMSITRTISD. One can recognise a Kinesin motor domain in the interval 104–421; the sequence is SISVTVRFRP…LKFASRAKRI (318 aa). 184–191 lines the ATP pocket; it reads GVTSSGKT. The stretch at 422 to 509 forms a coiled coil; that stretch reads EINASRNKII…QKLTKLILVS (88 aa). The disordered stretch occupies residues 549–578; it reads PSSTLSLASDARRSSSKFKDENSPVGSRAE. The segment covering 558 to 570 has biased composition (basic and acidic residues); sequence DARRSSSKFKDEN. 4 coiled-coil regions span residues 621–658, 704–826, 873–904, and 935–999; these read PENSKTQIQNLENDIQEKQRQMKSLEQRITESGEASIA, NNEL…AQKR, LEAALAEKEYIEEEFRKKAEEAKRREEALEND, and KEDE…SQAA. A compositionally biased stretch (low complexity) spans 824–838; sequence QKRNNNSMNSAANRN. A disordered region spans residues 824-847; that stretch reads QKRNNNSMNSAANRNGTRPGRKAR. A disordered region spans residues 922–946; that stretch reads ALSIQKSDEAEPAKEDEVTELDNKN. The segment covering 927–946 has biased composition (basic and acidic residues); the sequence is KSDEAEPAKEDEVTELDNKN. Residues 1011–1046 form an RING-type zinc finger; that stretch reads CKVCFESPTATILLPCRHFCLCKSCSLACSECPICR.

Belongs to the TRAFAC class myosin-kinesin ATPase superfamily. Kinesin family. KIN-7 subfamily.

The protein resides in the plastid. It is found in the chloroplast. The chain is Kinesin-like protein KIN-7M, chloroplastic from Arabidopsis thaliana (Mouse-ear cress).